Consider the following 556-residue polypeptide: Testis-specific protein 10-interacting protein (556 aa).

A compositionally biased stretch (polar residues) spans 1-20; it reads MGQETNMLNAHQQLVRTSSG. 2 disordered regions span residues 1 to 102 and 180 to 320; these read MGQE…SPRK and CTSI…GPWD. Residues 75 to 85 are compositionally biased toward basic residues; that stretch reads KDRRLRGRNKK. Composition is skewed to acidic residues over residues 213–225 and 246–260; these read EPEE…LGAE and LEEE…EAED. Residues 266–278 show a composition bias toward basic residues; that stretch reads PWRRRTSSRRKGR. The segment covering 304 to 320 has biased composition (basic and acidic residues); the sequence is EPQRRKPRAKELEGPWD. Residues 387 to 463 are a coiled coil; that stretch reads LRAWELQQRE…ELQGIQHRVQ (77 aa). The interval 503–556 is disordered; sequence AGKRDMEGAPRRHRSHRSVGARMEPSSQSPPKMEPTGSQADQHFAPNPDQELSP. Positions 527–543 are enriched in polar residues; it reads PSSQSPPKMEPTGSQAD.

The polypeptide is Testis-specific protein 10-interacting protein (TSGA10IP) (Bos taurus (Bovine)).